Here is an 80-residue protein sequence, read N- to C-terminus: Large ribosomal subunit protein bL28 (80 aa).

The tract at residues 1-23 (MARVCQITGKKTRTGNNVSHANN) is disordered.

Belongs to the bacterial ribosomal protein bL28 family.

The polypeptide is Large ribosomal subunit protein bL28 (Cytophaga hutchinsonii (strain ATCC 33406 / DSM 1761 / CIP 103989 / NBRC 15051 / NCIMB 9469 / D465)).